A 2959-amino-acid polypeptide reads, in one-letter code: uncharacterized protein (2959 aa).

It localises to the virion. This is an uncharacterized protein from Acanthamoeba polyphaga mimivirus (APMV).